Here is a 455-residue protein sequence, read N- to C-terminus: Immunoglobulin alpha-2 heavy chain (455 aa).

Ig-like domains lie at 1–95 (EVQL…VYYC), 121–213 (PKVF…QDVT), 227–322 (PRLS…ANIT), and 330–432 (PEVH…KTID). The tract at residues 1–115 (EVQLVETGGG…GKGTTVTVSS (115 aa)) is variable (V) domain, involved in antigen recognition. Intrachain disulfides connect Cys-22–Cys-95 and Cys-141–Cys-200. Residues 116-455 (ASPTSPKVFP…VMAEADGTCY (340 aa)) are constant (C) domain. Asn-162, Asn-207, and Asn-246 each carry an N-linked (GlcNAc...) asparagine glycan. Disulfide bonds link Cys-225–Cys-282 and Cys-249–Cys-306. A glycan (N-linked (GlcNAc...) asparagine) is linked at Asn-320. A disulfide bridge links Cys-352 with Cys-415. A glycan (N-linked (GlcNAc...) asparagine) is linked at Asn-442.

Immunoglobulins are composed of two identical heavy chains and two identical light chains; disulfide-linked. Monomeric or polymeric.

The protein localises to the secreted. It is found in the cell membrane. Its function is as follows. Immunoglobulins, also known as antibodies, are membrane-bound or secreted glycoproteins produced by B lymphocytes. In the recognition phase of humoral immunity, the membrane-bound immunoglobulins serve as receptors which, upon binding of a specific antigen, trigger the clonal expansion and differentiation of B lymphocytes into immunoglobulins-secreting plasma cells. Secreted immunoglobulins mediate the effector phase of humoral immunity, which results in the elimination of bound antigens. The antigen binding site is formed by the variable domain of one heavy chain, together with that of its associated light chain. Thus, each immunoglobulin has two antigen binding sites with remarkable affinity for a particular antigen. The variable domains are assembled by a process called V-(D)-J rearrangement and can then be subjected to somatic hypermutations which, after exposure to antigen and selection, allow affinity maturation for a particular antigen. Ig alpha is the major immunoglobulin class in body secretions. In Homo sapiens (Human), this protein is Immunoglobulin alpha-2 heavy chain.